The following is a 447-amino-acid chain: Na(+)-translocating NADH-quinone reductase subunit A (447 aa).

Belongs to the NqrA family. As to quaternary structure, composed of six subunits; NqrA, NqrB, NqrC, NqrD, NqrE and NqrF.

It carries out the reaction a ubiquinone + n Na(+)(in) + NADH + H(+) = a ubiquinol + n Na(+)(out) + NAD(+). Its function is as follows. NQR complex catalyzes the reduction of ubiquinone-1 to ubiquinol by two successive reactions, coupled with the transport of Na(+) ions from the cytoplasm to the periplasm. NqrA to NqrE are probably involved in the second step, the conversion of ubisemiquinone to ubiquinol. The polypeptide is Na(+)-translocating NADH-quinone reductase subunit A (Yersinia pestis).